A 555-amino-acid polypeptide reads, in one-letter code: Urocanate hydratase (555 aa).

NAD(+) is bound by residues Gly-52–Gly-53, Gln-130, Gly-176–Gly-178, Glu-196, Arg-201, Asn-242–Ala-243, Gln-263–His-267, Tyr-273–Leu-274, and Tyr-322. Cys-410 is an active-site residue. Gly-492 contacts NAD(+).

The protein belongs to the urocanase family. The cofactor is NAD(+).

The protein resides in the cytoplasm. It carries out the reaction 4-imidazolone-5-propanoate = trans-urocanate + H2O. It participates in amino-acid degradation; L-histidine degradation into L-glutamate; N-formimidoyl-L-glutamate from L-histidine: step 2/3. Its function is as follows. Catalyzes the conversion of urocanate to 4-imidazolone-5-propionate. The sequence is that of Urocanate hydratase from Shewanella sp. (strain W3-18-1).